A 389-amino-acid chain; its full sequence is Succinate--CoA ligase [ADP-forming] subunit beta (389 aa).

One can recognise an ATP-grasp domain in the interval Lys-9–Thr-244. ATP-binding positions include Lys-46, Gly-53–Gly-55, Gly-102, and Glu-107. Mg(2+) contacts are provided by Asn-199 and Asp-213. Residues Asn-264 and Gly-321–Val-323 contribute to the substrate site.

This sequence belongs to the succinate/malate CoA ligase beta subunit family. Heterotetramer of two alpha and two beta subunits. Requires Mg(2+) as cofactor.

The enzyme catalyses succinate + ATP + CoA = succinyl-CoA + ADP + phosphate. The catalysed reaction is GTP + succinate + CoA = succinyl-CoA + GDP + phosphate. It participates in carbohydrate metabolism; tricarboxylic acid cycle; succinate from succinyl-CoA (ligase route): step 1/1. Succinyl-CoA synthetase functions in the citric acid cycle (TCA), coupling the hydrolysis of succinyl-CoA to the synthesis of either ATP or GTP and thus represents the only step of substrate-level phosphorylation in the TCA. The beta subunit provides nucleotide specificity of the enzyme and binds the substrate succinate, while the binding sites for coenzyme A and phosphate are found in the alpha subunit. This is Succinate--CoA ligase [ADP-forming] subunit beta from Xanthomonas euvesicatoria pv. vesicatoria (strain 85-10) (Xanthomonas campestris pv. vesicatoria).